A 445-amino-acid chain; its full sequence is Argininosuccinate synthase (445 aa).

Residues 17–25 (AFSGGLDTS) and Ala-43 contribute to the ATP site. An L-citrulline-binding site is contributed by Tyr-99. Residues Gly-129 and Thr-131 each contribute to the ATP site. Residues Thr-131, Asn-135, and Asp-136 each coordinate L-aspartate. Asn-135 lines the L-citrulline pocket. Asp-136 lines the ATP pocket. 2 residues coordinate L-citrulline: Arg-139 and Ser-192. Residue Asp-194 participates in ATP binding. Positions 201, 203, and 280 each coordinate L-citrulline.

The protein belongs to the argininosuccinate synthase family. Type 2 subfamily. In terms of assembly, homotetramer.

The protein resides in the cytoplasm. It catalyses the reaction L-citrulline + L-aspartate + ATP = 2-(N(omega)-L-arginino)succinate + AMP + diphosphate + H(+). Its pathway is amino-acid biosynthesis; L-arginine biosynthesis; L-arginine from L-ornithine and carbamoyl phosphate: step 2/3. The polypeptide is Argininosuccinate synthase (Afipia carboxidovorans (strain ATCC 49405 / DSM 1227 / KCTC 32145 / OM5) (Oligotropha carboxidovorans)).